The chain runs to 244 residues: Proteasome subunit alpha 2 (244 aa).

The protein belongs to the peptidase T1A family. In terms of assembly, the 20S proteasome core is composed of 14 alpha and 14 beta subunits that assemble into four stacked heptameric rings, resulting in a barrel-shaped structure. The two inner rings, each composed of seven catalytic beta subunits, are sandwiched by two outer rings, each composed of seven alpha subunits. The catalytic chamber with the active sites is on the inside of the barrel. Has a gated structure, the ends of the cylinder being occluded by the N-termini of the alpha-subunits. Is capped at one or both ends by the proteasome regulatory ATPase, PAN.

The protein resides in the cytoplasm. The formation of the proteasomal ATPase PAN-20S proteasome complex, via the docking of the C-termini of PAN into the intersubunit pockets in the alpha-rings, triggers opening of the gate for substrate entry. Interconversion between the open-gate and close-gate conformations leads to a dynamic regulation of the 20S proteasome proteolysis activity. In terms of biological role, component of the proteasome core, a large protease complex with broad specificity involved in protein degradation. In Haloarcula marismortui (strain ATCC 43049 / DSM 3752 / JCM 8966 / VKM B-1809) (Halobacterium marismortui), this protein is Proteasome subunit alpha 2.